A 140-amino-acid chain; its full sequence is Histone H2B (140 aa).

Positions 1-10 are enriched in basic and acidic residues; that stretch reads MPPKAAEKKP. The tract at residues 1–48 is disordered; it reads MPPKAAEKKPTTGGKAPAGKAPAEKKEAGKKTAAAASGDKKKRGKTRK. An N6-acetyllysine; alternate mark is found at K8 and K9. Glycyl lysine isopeptide (Lys-Gly) (interchain with G-Cter in SUMO); alternate cross-links involve residues K8 and K9. The segment covering 11 to 21 has biased composition (low complexity); that stretch reads TTGGKAPAGKA. Position 15 is an N6-acetyllysine (K15). An N6-acetyllysine; alternate modification is found at K25. K25 participates in a covalent cross-link: Glycyl lysine isopeptide (Lys-Gly) (interchain with G-Cter in SUMO); alternate. Residue K26 forms a Glycyl lysine isopeptide (Lys-Gly) (interchain with G-Cter in SUMO) linkage. K134 participates in a covalent cross-link: Glycyl lysine isopeptide (Lys-Gly) (interchain with G-Cter in ubiquitin).

Belongs to the histone H2B family. As to quaternary structure, the nucleosome is a histone octamer containing two molecules each of H2A, H2B, H3 and H4 assembled in one H3-H4 heterotetramer and two H2A-H2B heterodimers. The octamer wraps approximately 147 bp of DNA. Monoubiquitinated by the ubc2-bre1 complex to form H2BK123ub1. H2BK123ub1 gives a specific tag for epigenetic transcriptional activation and is also prerequisite for H3K4me and H3K79me formation. H2BK123ub1 also modulates the formation of double-strand breaks during meiosis and is a prerequisite for DNA-damage checkpoint activation. In terms of processing, acetylated by gcn5 to form H2BK11ac and H2BK16ac. H2BK16ac can also be formed by esa1. Acetylation of N-terminal lysines and particularly formation of H2BK11acK16ac has a positive effect on transcription. Post-translationally, sumoylation to form H2BK6su or H2BK7su, and probably also H2BK16su or H2BK17su, occurs preferentially near the telomeres and represses gene transcription.

The protein localises to the nucleus. It localises to the chromosome. Functionally, core component of nucleosome. Nucleosomes wrap and compact DNA into chromatin, limiting DNA accessibility to the cellular machineries which require DNA as a template. Histones thereby play a central role in transcription regulation, DNA repair, DNA replication and chromosomal stability. DNA accessibility is regulated via a complex set of post-translational modifications of histones, also called histone code, and nucleosome remodeling. This chain is Histone H2B (htb1), found in Aspergillus terreus (strain NIH 2624 / FGSC A1156).